The following is a 1456-amino-acid chain: Alpha-2-macroglobulin-like protein 1 (1456 aa).

The signal sequence occupies residues 1 to 19 (MVPTILLSALLLHFTDVVA). N-linked (GlcNAc...) asparagine glycans are attached at residues Asn-48, Asn-172, and Asn-868.

This sequence belongs to the protease inhibitor I39 (alpha-2-macroglobulin) family. As to quaternary structure, homotetramer; consists of two dimer pairs that are disulfide-linked. Part of a complex composed of complement component C3, CLCA1/CLCA3, A2ML1/OH and ALB/serum albumin.

The protein localises to the secreted. Inhibits protease gelatinolytic complex activity against type 1 collagen. In Mus musculus (Mouse), this protein is Alpha-2-macroglobulin-like protein 1.